Here is a 180-residue protein sequence, read N- to C-terminus: Putative peroxiredoxin YkuU (180 aa).

The Thioredoxin domain occupies 4-165 (RMVGKQAPRF…TLRVLQALQT (162 aa)). Cysteine 52 acts as the Cysteine sulfenic acid (-SOH) intermediate in catalysis.

The protein belongs to the peroxiredoxin family. AhpC/Prx1 subfamily. As to quaternary structure, homodimer; disulfide-linked, upon oxidation.

The protein localises to the cytoplasm. The enzyme catalyses a hydroperoxide + [protein]-dithiol = [protein]-disulfide + an alcohol + H2O. In terms of biological role, thiol-specific peroxidase that catalyzes the reduction of hydrogen peroxide and organic hydroperoxides to water and alcohols, respectively. Plays a role in cell protection against oxidative stress by detoxifying peroxides. The protein is Putative peroxiredoxin YkuU (ykuU) of Bacillus subtilis (strain 168).